Consider the following 273-residue polypeptide: Undecaprenyl-diphosphatase (273 aa).

The next 7 membrane-spanning stretches (helical) occupy residues 6–26 (SLLIAAILGVVEGLTEFLPVS), 45–65 (AKTFEVVIQLGSILAVVVMFW), 90–110 (LTLIHILLGMIPAVVLGLLFH), 116–136 (LFNPINVMYALVVGGLLLIAA), 190–210 (YAASEFSFLLAVPMMMGATAL), 222–242 (GDISMFAVGFITAFVVALIAI), and 252–272 (ISFIPFAIYRFIVAAAVYVVF).

It belongs to the UppP family.

The protein localises to the cell inner membrane. It carries out the reaction di-trans,octa-cis-undecaprenyl diphosphate + H2O = di-trans,octa-cis-undecaprenyl phosphate + phosphate + H(+). Functionally, catalyzes the dephosphorylation of undecaprenyl diphosphate (UPP). Confers resistance to bacitracin. The protein is Undecaprenyl-diphosphatase of Shigella sonnei (strain Ss046).